The sequence spans 463 residues: Cysteine--tRNA ligase (463 aa).

Cysteine 27 is a Zn(2+) binding site. A 'HIGH' region motif is present at residues 29–39; it reads ATVQGLPHIGH. Zn(2+)-binding residues include cysteine 205, histidine 230, and glutamate 234. Residues 261-265 carry the 'KMSKS' region motif; the sequence is KMSKS. Residue lysine 264 coordinates ATP.

This sequence belongs to the class-I aminoacyl-tRNA synthetase family. Monomer. It depends on Zn(2+) as a cofactor.

The protein resides in the cytoplasm. The enzyme catalyses tRNA(Cys) + L-cysteine + ATP = L-cysteinyl-tRNA(Cys) + AMP + diphosphate. This Mycolicibacterium vanbaalenii (strain DSM 7251 / JCM 13017 / BCRC 16820 / KCTC 9966 / NRRL B-24157 / PYR-1) (Mycobacterium vanbaalenii) protein is Cysteine--tRNA ligase.